We begin with the raw amino-acid sequence, 430 residues long: S-adenosylmethionine synthase (430 aa).

Residue His14 participates in ATP binding. A Mg(2+)-binding site is contributed by Asp16. Glu42 is a binding site for K(+). Glu55 and Gln98 together coordinate L-methionine. The interval 98–108 (QSPDINRGVER) is flexible loop. Residues 164–166 (DAK), 254–255 (KF), Asp263, 269–270 (RK), Ala286, and Lys290 each bind ATP. Asp263 lines the L-methionine pocket. Lys294 is a binding site for L-methionine.

The protein belongs to the AdoMet synthase family. Homotetramer; dimer of dimers. It depends on Mg(2+) as a cofactor. Requires K(+) as cofactor.

The protein resides in the cytoplasm. The catalysed reaction is L-methionine + ATP + H2O = S-adenosyl-L-methionine + phosphate + diphosphate. The protein operates within amino-acid biosynthesis; S-adenosyl-L-methionine biosynthesis; S-adenosyl-L-methionine from L-methionine: step 1/1. Functionally, catalyzes the formation of S-adenosylmethionine (AdoMet) from methionine and ATP. The overall synthetic reaction is composed of two sequential steps, AdoMet formation and the subsequent tripolyphosphate hydrolysis which occurs prior to release of AdoMet from the enzyme. This is S-adenosylmethionine synthase from Bacteroides thetaiotaomicron (strain ATCC 29148 / DSM 2079 / JCM 5827 / CCUG 10774 / NCTC 10582 / VPI-5482 / E50).